A 737-amino-acid chain; its full sequence is Delta and Notch-like epidermal growth factor-related receptor (737 aa).

The first 25 residues, 1–25, serve as a signal peptide directing secretion; sequence MPPRRAQAPGAPLLPVLALLPLLLG. Residues 26–640 lie on the Extracellular side of the membrane; the sequence is AGPQSGCLAS…LTNMPRHSLY (615 aa). EGF-like domains are found at residues 44-92 and 94-133; these read APGP…TYCQ and VADP…LNCE. An interaction with NOTCH1 region spans residues 44–133; sequence APGPCASQPC…NDGYEGLNCE (90 aa). 6 cysteine pairs are disulfide-bonded: Cys48–Cys59, Cys53–Cys80, Cys82–Cys91, Cys98–Cys108, Cys103–Cys121, and Cys123–Cys132. N-linked (GlcNAc...) asparagine glycosylation occurs at Asn204. EGF-like domains follow at residues 309–348, 349–390, 392–428, 430–466, and 468–503; these read PGDS…TFCE, EFDA…ELCQ, KIDY…SACE, KVDP…PTCA, and LVDF…LYCE. 23 cysteine pairs are disulfide-bonded: Cys319/Cys336, Cys338/Cys347, Cys353/Cys364, Cys358/Cys378, Cys380/Cys389, Cys396/Cys407, Cys401/Cys416, Cys418/Cys427, Cys434/Cys445, Cys439/Cys454, Cys456/Cys465, Cys472/Cys482, Cys477/Cys491, Cys493/Cys502, Cys509/Cys520, Cys514/Cys529, Cys531/Cys540, Cys547/Cys558, Cys552/Cys567, Cys569/Cys578, Cys585/Cys596, Cys590/Cys605, and Cys607/Cys616. Residues 505 to 541 enclose the EGF-like 8; calcium-binding domain; the sequence is EYNECLSAPCLNAATCRDLINGYECVCLAEYKGTHCE. The EGF-like 9 domain maps to 543–579; sequence YKDPCANISCLNGGTCDSEGLNGTCICAPGFTGEECD. An N-linked (GlcNAc...) asparagine glycan is attached at Asn564. The EGF-like 10; calcium-binding domain occupies 581-617; it reads DINECDSNPCHHAGTCLDQPNGYTCHCPHGWVGANCE. Residues 641–661 traverse the membrane as a helical segment; that stretch reads IIIGALCVAFILMLIILIVGI. At 662-737 the chain is on the cytoplasmic side; it reads CRISRIEYQG…LVTLIKTKDL (76 aa). The segment at 677–680 is interaction with AP1G1 and somatodendritic targeting; sequence YEEF. Ser685 is modified (phosphoserine). Tyr711 bears the Phosphotyrosine mark. Phosphothreonine is present on Thr714. Tyr721 bears the Phosphotyrosine mark. A Phosphoserine modification is found at Ser722.

Interacts with AP1G1. Interacts with NOTCH1. In terms of processing, N-glycosylated. As to expression, specifically expressed in brain neurons (at protein level).

The protein resides in the cell membrane. Mediates neuron-glia interaction during astrocytogenesis. May promote differentiation of Bergmann glia during cerebellar development by activating DELTEX-dependent NOTCH1 signaling. This chain is Delta and Notch-like epidermal growth factor-related receptor (Dner), found in Mus musculus (Mouse).